Here is a 356-residue protein sequence, read N- to C-terminus: UDP-N-acetylglucosamine--N-acetylmuramyl-(pentapeptide) pyrophosphoryl-undecaprenol N-acetylglucosamine transferase (356 aa).

Residues 12–14 (TGG), Asn-124, Arg-163, Ser-188, Ile-242, and Gln-287 contribute to the UDP-N-acetyl-alpha-D-glucosamine site.

Belongs to the glycosyltransferase 28 family. MurG subfamily.

The protein resides in the cell inner membrane. The catalysed reaction is di-trans,octa-cis-undecaprenyl diphospho-N-acetyl-alpha-D-muramoyl-L-alanyl-D-glutamyl-meso-2,6-diaminopimeloyl-D-alanyl-D-alanine + UDP-N-acetyl-alpha-D-glucosamine = di-trans,octa-cis-undecaprenyl diphospho-[N-acetyl-alpha-D-glucosaminyl-(1-&gt;4)]-N-acetyl-alpha-D-muramoyl-L-alanyl-D-glutamyl-meso-2,6-diaminopimeloyl-D-alanyl-D-alanine + UDP + H(+). It participates in cell wall biogenesis; peptidoglycan biosynthesis. Functionally, cell wall formation. Catalyzes the transfer of a GlcNAc subunit on undecaprenyl-pyrophosphoryl-MurNAc-pentapeptide (lipid intermediate I) to form undecaprenyl-pyrophosphoryl-MurNAc-(pentapeptide)GlcNAc (lipid intermediate II). The protein is UDP-N-acetylglucosamine--N-acetylmuramyl-(pentapeptide) pyrophosphoryl-undecaprenol N-acetylglucosamine transferase of Pseudomonas savastanoi pv. phaseolicola (strain 1448A / Race 6) (Pseudomonas syringae pv. phaseolicola (strain 1448A / Race 6)).